The following is a 158-amino-acid chain: Chromobox protein homolog 7 (158 aa).

Positions 11-69 (FAVESIRKKRVRKGKVEYLVKWKGWPPKYSTWEPEEHILDPRLVMAYEEKEERDRASGY) constitute a Chromo domain. Residues 60-127 (KEERDRASGY…WTPTLPSSEV (68 aa)) are disordered. The segment covering 68-78 (GYRKRGPKPRR) has biased composition (basic residues).

In terms of assembly, component of a PRC1-like complex. Distinct PRC1-like core complexes are composed of a RING1 subunit (RING1B or RING1A), one of the six PCGF proteins (PCGF1-6), one PHC protein (PHC1-3) and one of the CBX proteins (CBX2, CBX4, CBX6, CBX7 or CBX8). The composition of the PRC1 complex may differ between the PRC1 complex in pluripotent embryonic stem cells containing RNF2, CBX7 and PCGF2, and the PRC1 complex in differentiating cells containing RNF2, CBX2, CBX4 and BMI1. Interacts with RING1. Interacts with RNF2, PHC1 and PCGF2. Interacts (via chromodomain) with histone H3K9Me3 and H3K27me3. Interacts with H3K9Me2 and H4K20Me1. Interacts (via chromodomain) with single-stranded and double-stranded RNA; RNA binding seems to be required for the localization to chromatin. Interacts with PCGF1, PCGF3, PCGF5 and PCGF6. As to expression, expressed in embryonic stem cells.

It is found in the nucleus. The protein resides in the chromosome. Functionally, component of a Polycomb group (PcG) multiprotein PRC1-like complex, a complex class required to maintain the transcriptionally repressive state of many genes, including Hox genes, throughout development. PcG PRC1 complex acts via chromatin remodeling and modification of histones; it mediates monoubiquitination of histone H2A 'Lys-119', rendering chromatin heritably changed in its expressibility. Promotes histone H3 trimethylation at 'Lys-9' (H3K9me3). Binds to histone H3 trimethylated at 'Lys-9' (H3K9me3) or at 'Lys-27' (H3K27me3). Trimethylation at 'Lys-27' (H3K27me3) is important for chromatin recruitment. May possibly also bind trimethylated lysine residues in other proteins (in vitro). Binds non-coding, single-stranded RNA and double-stranded RNA. Plays a role in the timely repression of differentiation-specific genes in pluripotent embryonic stem cells to maintain the undifferentiated state. Regulator of cellular lifespan by maintaining the repression of CDKN2A, but not by inducing telomerase activity. The sequence is that of Chromobox protein homolog 7 (Cbx7) from Mus musculus (Mouse).